Here is a 359-residue protein sequence, read N- to C-terminus: Dihydroorotate dehydrogenase (quinone) (359 aa).

FMN-binding positions include 65 to 69 (AGLDK) and Thr-89. Position 69 (Lys-69) interacts with substrate. 114-118 (NRLGF) is a substrate binding site. Residues Asn-149 and Asn-182 each coordinate FMN. Asn-182 provides a ligand contact to substrate. The active-site Nucleophile is the Ser-185. Asn-187 contacts substrate. Lys-233 and Thr-261 together coordinate FMN. A substrate-binding site is contributed by 262–263 (NT). FMN is bound by residues Gly-284, Gly-313, and 334 to 335 (YT).

This sequence belongs to the dihydroorotate dehydrogenase family. Type 2 subfamily. In terms of assembly, monomer. It depends on FMN as a cofactor.

It localises to the cell membrane. The enzyme catalyses (S)-dihydroorotate + a quinone = orotate + a quinol. The protein operates within pyrimidine metabolism; UMP biosynthesis via de novo pathway; orotate from (S)-dihydroorotate (quinone route): step 1/1. Its function is as follows. Catalyzes the conversion of dihydroorotate to orotate with quinone as electron acceptor. This Paracidovorax citrulli (strain AAC00-1) (Acidovorax citrulli) protein is Dihydroorotate dehydrogenase (quinone).